The sequence spans 156 residues: tRNA (cytidine(34)-2'-O)-methyltransferase (156 aa).

G102, L124, and S132 together coordinate S-adenosyl-L-methionine.

The protein belongs to the class IV-like SAM-binding methyltransferase superfamily. RNA methyltransferase TrmH family. TrmL subfamily. As to quaternary structure, homodimer.

The protein resides in the cytoplasm. The catalysed reaction is cytidine(34) in tRNA + S-adenosyl-L-methionine = 2'-O-methylcytidine(34) in tRNA + S-adenosyl-L-homocysteine + H(+). The enzyme catalyses 5-carboxymethylaminomethyluridine(34) in tRNA(Leu) + S-adenosyl-L-methionine = 5-carboxymethylaminomethyl-2'-O-methyluridine(34) in tRNA(Leu) + S-adenosyl-L-homocysteine + H(+). Its function is as follows. Methylates the ribose at the nucleotide 34 wobble position in the two leucyl isoacceptors tRNA(Leu)(CmAA) and tRNA(Leu)(cmnm5UmAA). Catalyzes the methyl transfer from S-adenosyl-L-methionine to the 2'-OH of the wobble nucleotide. The protein is tRNA (cytidine(34)-2'-O)-methyltransferase of Burkholderia cenocepacia (strain HI2424).